The following is a 624-amino-acid chain: Probable potassium transport system protein Kup 2 (624 aa).

12 helical membrane-spanning segments follow: residues 14 to 34 (LSFA…LYAF), 51 to 71 (ILSL…LVIV), 97 to 117 (GGWL…DGML), 133 to 153 (LSPN…FFLF), 163 to 183 (IGVY…ILGF), 211 to 231 (SALF…ALFA), 245 to 265 (WFAV…AFVL), 283 to 303 (FLPV…QAII), 335 to 355 (VYLP…VVIF), 364 to 384 (AYGI…GIIA), 393 to 413 (FKIL…AGNI), and 416 to 436 (LLTG…VMYT).

The protein belongs to the HAK/KUP transporter (TC 2.A.72) family.

It localises to the cell inner membrane. The catalysed reaction is K(+)(in) + H(+)(in) = K(+)(out) + H(+)(out). Functionally, transport of potassium into the cell. Likely operates as a K(+):H(+) symporter. This chain is Probable potassium transport system protein Kup 2, found in Legionella pneumophila (strain Lens).